Here is a 310-residue protein sequence, read N- to C-terminus: Glutaminase (310 aa).

Substrate is bound by residues S66, N117, E161, N168, Y192, Y244, and V262. K294 carries the N6-acetyllysine modification.

The protein belongs to the glutaminase family. Homotetramer.

The catalysed reaction is L-glutamine + H2O = L-glutamate + NH4(+). This Escherichia coli O81 (strain ED1a) protein is Glutaminase.